The chain runs to 1201 residues: Kinesin-like protein costa (1201 aa).

The region spanning 4–391 (PIQVAVRIFP…LQFAFKVQCV (388 aa)) is the Kinesin motor domain. A disordered region spans residues 23–92 (SFGPTEPKKD…NGNDSGQKDY (70 aa)). The segment covering 28-56 (EPKKDAQAVDEGADSKDSEAQVPAAEKDN) has biased composition (basic and acidic residues). Residues 57-75 (PSISETDPNGNAEQDSAAD) are compositionally biased toward polar residues. ATP is bound at residue 175-182 (GQRGQGKS). 3 disordered regions span residues 502–536 (AEEPEDVNSEAANSESPNSDNENDTDNESHRPDLD), 565–606 (HPKA…GASL), and 618–639 (ASQQPPPPIDPESVVDPLESSS). The span at 510-521 (SEAANSESPNSD) shows a compositional bias: low complexity. Residues serine 599 and serine 605 each carry the phosphoserine modification. 2 coiled-coil regions span residues 652–821 (AATA…ELVK) and 968–1001 (TKVIDLRDSSRKLELQLVQLERERDAWEWKERVL).

It belongs to the TRAFAC class myosin-kinesin ATPase superfamily. Kinesin family. KIF27 subfamily. In terms of assembly, homodimer (Potential). Binds microtubules. Interacts with ci, smo, sgg, CkIalpha and protein kinase A catalytic subunit. Interacts (via kinesin motor domain) with Ubr3. In terms of processing, polyubiquitinated by Ubr3, which leads to proteasomal degradation.

The protein resides in the cytoplasm. The protein localises to the cytoskeleton. Regulates cubitus interruptus (ci) processing by recruiting multiple kinases to promote its efficient phosphorylation. Scaffolds multiple kinases and ci into proximity to promote its hyperphosphorylation, which then targets it for SCFSlimb/proteasome-mediated processing to generate its repressor form. Hh signaling inhibits ci phosphorylation by interfering with the cos-ci-kinases complex formation. Negatively regulates hh-signaling pathways during various processes, including photoreceptor differentiation. May negatively regulate a hh-signaling pathway which functions in the intestinal immune response to bacterial uracil by activating the Duox-dependent production of reactive oxygen species (ROS). The protein is Kinesin-like protein costa (cos) of Drosophila melanogaster (Fruit fly).